Here is a 172-residue protein sequence, read N- to C-terminus: Early E3 18.5 kDa glycoprotein (172 aa).

The first 19 residues, 1-19 (MGAILVVLALLSLLGLGSA), serve as a signal peptide directing secretion. At 20–136 (NLNPLDHDPC…SKENIVAFSI (117 aa)) the chain is on the lumenal side. N-linked (GlcNAc...) asparagine; by host glycosylation is present at Asn-36. Intrachain disulfides connect Cys-37–Cys-55 and Cys-49–Cys-111. Asn-68, Asn-72, and Asn-102 each carry an N-linked (GlcNAc...) asparagine; by host glycan. Residues 137 to 157 (AYCLVTCIITAIICVCIHLLI) traverse the membrane as a helical segment. Residues 158 to 172 (VIRPRQSNEEKEKMP) are Cytoplasmic-facing. A Di-lysine motif motif is present at residues 168–172 (KEKMP).

Belongs to the adenoviridae E19 family. Post-translationally, both disulfide bonds are absolutely critical for the interaction with MHC antigens. In terms of processing, N-glycosylated; high-mannose.

It is found in the host endoplasmic reticulum membrane. Its function is as follows. Binds and retains class I heavy chains in the endoplasmic reticulum during the early period of virus infection, thereby impairing their transport to the cell surface. Also delays the expression of class I alleles that it cannot affect by direct retention. Binds transporters associated with antigen processing (TAP) and acts as a tapasin inhibitor, preventing class I/TAP association. In consequence, infected cells are masked for immune recognition by cytotoxic T-lymphocytes. This chain is Early E3 18.5 kDa glycoprotein, found in Human adenovirus B serotype 3 (HAdV-3).